The chain runs to 91 residues: UPF0358 protein SSP1677 (91 aa).

This sequence belongs to the UPF0358 family.

The polypeptide is UPF0358 protein SSP1677 (Staphylococcus saprophyticus subsp. saprophyticus (strain ATCC 15305 / DSM 20229 / NCIMB 8711 / NCTC 7292 / S-41)).